The following is a 133-amino-acid chain: Large ribosomal subunit protein uL16c (133 aa).

Belongs to the universal ribosomal protein uL16 family. In terms of assembly, part of the 50S ribosomal subunit.

Its subcellular location is the plastid. The sequence is that of Large ribosomal subunit protein uL16c from Euglena longa (Euglenophycean alga).